A 906-amino-acid polypeptide reads, in one-letter code: Coatomer subunit beta' (906 aa).

WD repeat units lie at residues 13–52 (ARSD…LVKT), 55–94 (VCDL…RVHM), 97–136 (AHSD…SCSQ), 140–180 (GHTH…PNFT), 183–224 (GHEK…CVQT), 227–266 (GHAQ…LEST), 350–388 (SCEI…NKSF), and 390–425 (SAQE…KSFK). Lysine 627 is subject to N6-acetyllysine. One copy of the WD 9 repeat lies at 746–783 (IRTGRLPEAAFLARTYLPSQVSRVVKLWRENLSKVNQK). The interval 837–863 (EEAKGFQPSRSTAQQELDGKPASPTPV) is disordered. Phosphoserine is present on serine 859. Threonine 861 carries the post-translational modification Phosphothreonine. A coiled-coil region spans residues 866–890 (ASHTANKEEKSLLELEVDLDNLELV).

It belongs to the WD repeat COPB2 family. As to quaternary structure, oligomeric complex that consists of at least the alpha, beta, beta', gamma, delta, epsilon and zeta subunits. Probably interacts with PEX11A. Interacts with SCYL1. Interacts with JAGN1.

The protein resides in the cytoplasm. The protein localises to the cytosol. Its subcellular location is the golgi apparatus membrane. It is found in the cytoplasmic vesicle. It localises to the COPI-coated vesicle membrane. In terms of biological role, the coatomer is a cytosolic protein complex that binds to dilysine motifs and reversibly associates with Golgi non-clathrin-coated vesicles, which further mediate biosynthetic protein transport from the ER, via the Golgi up to the trans Golgi network. Coatomer complex is required for budding from Golgi membranes, and is essential for the retrograde Golgi-to-ER transport of dilysine-tagged proteins. In mammals, the coatomer can only be recruited by membranes associated to ADP-ribosylation factors (ARFs), which are small GTP-binding proteins; the complex also influences the Golgi structural integrity, as well as the processing, activity, and endocytic recycling of LDL receptors. This coatomer complex protein, essential for Golgi budding and vesicular trafficking, is a selective binding protein (RACK) for protein kinase C, epsilon type. It binds to Golgi membranes in a GTP-dependent manner. The chain is Coatomer subunit beta' (COPB2) from Pongo abelii (Sumatran orangutan).